A 1072-amino-acid chain; its full sequence is PWWP domain-containing protein 1 (1072 aa).

A disordered region spans residues Asp-21–Leu-133. A compositionally biased stretch (low complexity) spans Asp-25–Ser-38. Basic and acidic residues predominate over residues Arg-66–Gly-77. Over residues Lys-96–Glu-128 the composition is skewed to acidic residues. The region spanning Val-173 to Asn-234 is the PWWP domain. A disordered region spans residues Lys-365 to Ser-387. Residues Ser-366–Glu-375 show a composition bias toward polar residues. The Nuclear localization signal 1 motif lies at Ser-402 to Lys-409. Disordered regions lie at residues Ala-486 to Gly-619, Leu-681 to Gln-738, Lys-871 to Arg-931, and Glu-944 to Val-973. Residues Ser-498–Ser-526 are compositionally biased toward basic and acidic residues. Residues Ala-545–Ser-568 show a composition bias toward polar residues. 3 consecutive short sequence motifs (nuclear localization signal) follow at residues Lys-596 to Asp-603, Val-705 to Ser-712, and Leu-733 to Lys-740. The span at Lys-706 to Ser-729 shows a compositional bias: basic and acidic residues. Over residues Lys-871–Thr-880 the composition is skewed to basic and acidic residues. The span at Leu-897–Asn-906 shows a compositional bias: pro residues. Residues Ser-921–Asn-930 are compositionally biased toward low complexity. A compositionally biased stretch (polar residues) spans Ser-947–Pro-966.

It belongs to the PDP family. As to quaternary structure, interacts with MSI4/FVE. Component of the PRC2 (polycomb repressive complex 2) complex which regulates histone methylation on histone H3K27.

The protein localises to the nucleus. Together with PDP2, PDP3 and PDP6, interacts with MSI4/FVE and MSI5 to suppress FLC, MAF4 and MAF5 expression by regulating the function of the PRC2 complex and modulating H3K27me3 level, thereby promoting flowering. This is PWWP domain-containing protein 1 from Arabidopsis thaliana (Mouse-ear cress).